A 473-amino-acid polypeptide reads, in one-letter code: Photosystem II CP43 reaction center protein (473 aa).

Residues 1–14 (MKTLYSPRRFYPVE) constitute a propeptide that is removed on maturation. An N-acetylthreonine modification is found at threonine 15. Threonine 15 is modified (phosphothreonine). A run of 5 helical transmembrane segments spans residues 69–93 (LFEV…PHLA), 134–155 (LLGP…KDRN), 178–200 (KALY…RKIS), 255–275 (KPFA…LSYS), and 291–312 (WFNN…ASQA). Glutamate 367 is a binding site for [CaMn4O5] cluster. A helical membrane pass occupies residues 447–471 (RARAAAAGFEKGIDRDLEPVLFMTP).

The protein belongs to the PsbB/PsbC family. PsbC subfamily. As to quaternary structure, PSII is composed of 1 copy each of membrane proteins PsbA, PsbB, PsbC, PsbD, PsbE, PsbF, PsbH, PsbI, PsbJ, PsbK, PsbL, PsbM, PsbT, PsbX, PsbY, PsbZ, Psb30/Ycf12, at least 3 peripheral proteins of the oxygen-evolving complex and a large number of cofactors. It forms dimeric complexes. It depends on Binds multiple chlorophylls and provides some of the ligands for the Ca-4Mn-5O cluster of the oxygen-evolving complex. It may also provide a ligand for a Cl- that is required for oxygen evolution. PSII binds additional chlorophylls, carotenoids and specific lipids. as a cofactor.

It is found in the plastid. The protein resides in the chloroplast thylakoid membrane. In terms of biological role, one of the components of the core complex of photosystem II (PSII). It binds chlorophyll and helps catalyze the primary light-induced photochemical processes of PSII. PSII is a light-driven water:plastoquinone oxidoreductase, using light energy to abstract electrons from H(2)O, generating O(2) and a proton gradient subsequently used for ATP formation. In Ranunculus macranthus (Large buttercup), this protein is Photosystem II CP43 reaction center protein.